A 126-amino-acid polypeptide reads, in one-letter code: Major sperm protein 3 (126 aa).

An N-acetylalanine modification is found at Ala-2. The region spanning 8–125 is the MSP domain; it reads DIATMPAQKV…RRKNLPIEYN (118 aa).

In terms of tissue distribution, sperm.

The protein localises to the cell projection. It localises to the pseudopodium. Its subcellular location is the cytoplasm. The protein resides in the cytoskeleton. In terms of biological role, central component in molecular interactions underlying sperm crawling. Forms an extensive filament system that extends from sperm villipoda, along the leading edge of the pseudopod. The sequence is that of Major sperm protein 3 (MSP-3) from Globodera rostochiensis (Golden nematode worm).